Here is a 608-residue protein sequence, read N- to C-terminus: Glutamine--fructose-6-phosphate aminotransferase [isomerizing] (608 aa).

Residue cysteine 2 is the Nucleophile; for GATase activity of the active site. The 217-residue stretch at 2 to 218 (CGICGIVGHQ…DGDWCELTPD (217 aa)) folds into the Glutamine amidotransferase type-2 domain. SIS domains are found at residues 284-423 (MPFD…ARGT) and 456-598 (MAAV…VDQP). Lysine 603 (for Fru-6P isomerization activity) is an active-site residue.

As to quaternary structure, homodimer.

The protein localises to the cytoplasm. It carries out the reaction D-fructose 6-phosphate + L-glutamine = D-glucosamine 6-phosphate + L-glutamate. Its function is as follows. Catalyzes the first step in hexosamine metabolism, converting fructose-6P into glucosamine-6P using glutamine as a nitrogen source. The sequence is that of Glutamine--fructose-6-phosphate aminotransferase [isomerizing] from Gluconobacter oxydans (strain 621H) (Gluconobacter suboxydans).